The following is a 168-amino-acid chain: Acetolactate synthase small subunit (168 aa).

Positions 7 to 82 constitute an ACT domain; it reads TLSVLVEDKP…VIKIVEQDDE (76 aa).

Belongs to the acetolactate synthase small subunit family. As to quaternary structure, dimer of large and small chains.

The enzyme catalyses 2 pyruvate + H(+) = (2S)-2-acetolactate + CO2. It participates in amino-acid biosynthesis; L-isoleucine biosynthesis; L-isoleucine from 2-oxobutanoate: step 1/4. It functions in the pathway amino-acid biosynthesis; L-valine biosynthesis; L-valine from pyruvate: step 1/4. The sequence is that of Acetolactate synthase small subunit (ilvH) from Mycobacterium bovis (strain ATCC BAA-935 / AF2122/97).